Consider the following 124-residue polypeptide: Fluoride-specific ion channel FluC 2 (124 aa).

The next 4 membrane-spanning stretches (helical) occupy residues 9–29, 34–54, 67–87, and 99–119; these read LGIFLAAMLGGLVRYLVSTWL, DFPWGTLFVNYLGIFCLIFLV, LILALGTGFCGGLTTFSSLML, and FSLVLYLLLSIGGGLLLAYFL. G77 and T80 together coordinate Na(+).

It belongs to the fluoride channel Fluc/FEX (TC 1.A.43) family.

The protein localises to the cell membrane. It catalyses the reaction fluoride(in) = fluoride(out). Na(+) is not transported, but it plays an essential structural role and its presence is essential for fluoride channel function. Its function is as follows. Fluoride-specific ion channel. Important for reducing fluoride concentration in the cell, thus reducing its toxicity. The polypeptide is Fluoride-specific ion channel FluC 2 (Streptococcus pneumoniae (strain ATCC BAA-255 / R6)).